Here is a 187-residue protein sequence, read N- to C-terminus: Cell division protein SepF (187 aa).

Residues 21–97 (EVEVPDKQQQ…ATPNNASQES (77 aa)) are disordered. 2 stretches are compositionally biased toward polar residues: residues 38-63 (EQSQ…YTTT) and 70-97 (RMSN…SQES).

It belongs to the SepF family. As to quaternary structure, homodimer. Interacts with FtsZ.

The protein resides in the cytoplasm. In terms of biological role, cell division protein that is part of the divisome complex and is recruited early to the Z-ring. Probably stimulates Z-ring formation, perhaps through the cross-linking of FtsZ protofilaments. Its function overlaps with FtsA. This is Cell division protein SepF from Staphylococcus aureus (strain MRSA252).